A 592-amino-acid polypeptide reads, in one-letter code: Peroxisomal targeting signal receptor (592 aa).

Residue Cys10 forms a Glycyl cysteine thioester (Cys-Gly) (interchain with G-Cter in ubiquitin) linkage. The amphipathic helix 1 (AH1) stretch occupies residues Ser11–Gln33. Lys22 is covalently cross-linked (Glycyl lysine isopeptide (Lys-Gly) (interchain with G-Cter in ubiquitin)). A compositionally biased stretch (polar residues) spans Lys22–Gly46. The tract at residues Lys22 to Lys49 is disordered. The amphipathic helix 2 (AH2) stretch occupies residues Arg58–Phe76. 3 consecutive short sequence motifs (wxxxF/Y motif) follow at residues Trp100 to Phe104, Trp128 to Phe132, and Trp185 to Phe189. Residues Phe223 to Phe239 form an amphipathic helix 4 (AH4) region. A WxxxF/Y motif 4 motif is present at residues Trp262–Phe266. TPR repeat units follow at residues Asp295 to His329, Val330 to Asn363, Ala440 to Asp473, Ile475 to Phe507, and Arg509 to Glu541.

The protein belongs to the peroxisomal targeting signal receptor family. In terms of assembly, interacts (via WxxxF/Y and LVxEF motifs) with PEX14; promoting translocation through the PEX13-PEX14 docking complex. Monoubiquitinated at Cys-10 by PEX2 during PEX5 passage through the retrotranslocation channel: monoubiquitination acts as a signal for PEX5 extraction and is required for proper export from peroxisomes and recycling. When PEX5 recycling is compromised, polyubiquitinated at Lys-22 by PEX10 during its passage through the retrotranslocation channel, leading to its degradation.

It localises to the cytoplasm. It is found in the cytosol. Its subcellular location is the peroxisome matrix. Its function is as follows. Receptor that mediates peroxisomal import of proteins containing a C-terminal PTS1-type tripeptide peroxisomal targeting signal (SKL-type). Binds to cargo proteins containing a PTS1 peroxisomal targeting signal in the cytosol, and translocates them into the peroxisome matrix by passing through the PEX13-PEX14 docking complex along with cargo proteins. PEX5 receptor is then retrotranslocated into the cytosol, leading to release of bound cargo in the peroxisome matrix, and reset for a subsequent peroxisome import cycle. This is Peroxisomal targeting signal receptor (PEX5) from Candida albicans (strain SC5314 / ATCC MYA-2876) (Yeast).